A 112-amino-acid polypeptide reads, in one-letter code: Nucleoid-associated protein RER_03900 (112 aa).

This sequence belongs to the YbaB/EbfC family. In terms of assembly, homodimer.

It localises to the cytoplasm. Its subcellular location is the nucleoid. Functionally, binds to DNA and alters its conformation. May be involved in regulation of gene expression, nucleoid organization and DNA protection. The protein is Nucleoid-associated protein RER_03900 of Rhodococcus erythropolis (strain PR4 / NBRC 100887).